A 240-amino-acid polypeptide reads, in one-letter code: Lysoplasmalogenase TMEM86A (240 aa).

The Cytoplasmic segment spans residues Met1 to Ala21. The chain crosses the membrane as a helical span at residues Thr22 to Ile42. Residue Lys43 is a topological domain, extracellular. Residues Cys44 to Ala64 traverse the membrane as a helical segment. The Cytoplasmic portion of the chain corresponds to His65–Arg70. Residues Ile71 to Gly91 traverse the membrane as a helical segment. Position 92 (Tyr92) is a topological domain, extracellular. The helical transmembrane segment at Phe93–Met113 threads the bilayer. Topologically, residues Gln114–Pro115 are cytoplasmic. Residues Leu116–Tyr136 form a helical membrane-spanning segment. Residues Pro137 to Cys138 lie on the Extracellular side of the membrane. Residues Leu139–Trp159 traverse the membrane as a helical segment. At Arg160 to Trp174 the chain is on the cytoplasmic side. The helical transmembrane segment at Thr175 to Leu195 threads the bilayer. At Asn196–Arg206 the chain is on the extracellular side. A helical membrane pass occupies residues Ala207–Ser227. Residues Arg228–Asn240 are Cytoplasmic-facing.

It belongs to the TMEM86 family. As to expression, expressed in the macrophages.

Its subcellular location is the endoplasmic reticulum membrane. It catalyses the reaction a 1-O-(1Z-alkenyl)-sn-glycero-3-phosphocholine + H2O = a 2,3-saturated aldehyde + sn-glycerol 3-phosphocholine. The enzyme catalyses a 1-O-(1Z-alkenyl)-sn-glycero-3-phosphoethanolamine + H2O = a 2,3-saturated aldehyde + sn-glycero-3-phosphoethanolamine. In terms of biological role, catalyzes the hydrolysis of the vinyl ether bond of choline or ethanolamine lysoplasmalogens, forming fatty aldehyde and glycerophosphocholine or glycerophosphoethanolamine, respectively and is specific for the sn-2-deacylated (lyso) form of plasmalogen. Plays an important role in lysoplasmalogen metabolism in the adipocyte tissue and macrophages. In Homo sapiens (Human), this protein is Lysoplasmalogenase TMEM86A (TMEM86A).